A 309-amino-acid polypeptide reads, in one-letter code: Cysteinyl leukotriene receptor 2 (309 aa).

The Extracellular portion of the chain corresponds to Met-1 to Pro-26. Asn-14 carries N-linked (GlcNAc...) asparagine glycosylation. The helical transmembrane segment at Ile-27–Phe-47 threads the bilayer. Residues Leu-48–Ser-56 are Cytoplasmic-facing. The chain crosses the membrane as a helical span at residues Val-57–Phe-77. The Extracellular segment spans residues Arg-78–Met-98. Cys-95 and Cys-171 are disulfide-bonded. The helical transmembrane segment at Ser-99 to Val-119 threads the bilayer. Residues Arg-120–Ser-138 lie on the Cytoplasmic side of the membrane. Residues Ala-139–Val-159 traverse the membrane as a helical segment. At Asn-160 to His-187 the chain is on the extracellular side. Residues Ile-188–Ile-208 form a helical membrane-spanning segment. The Cytoplasmic segment spans residues Ile-209–Ala-229. The helical transmembrane segment at Leu-230 to Leu-250 threads the bilayer. Over Arg-251 to Thr-271 the chain is Extracellular. A helical membrane pass occupies residues Val-272 to Ala-292. Residues Gly-293–Leu-309 are Cytoplasmic-facing.

This sequence belongs to the G-protein coupled receptor 1 family. In terms of tissue distribution, widely expressed at low levels, with highest expression in the spleen, thymus and adrenal gland, and lower in the kidney, brain and peripheral blood leukocytes.

It is found in the cell membrane. Receptor for cysteinyl leukotrienes. The response is mediated via a G-protein that activates a phosphatidylinositol-calcium second messenger system. The rank order of affinities for the leukotrienes is LTC4 = LTD4 &gt;&gt; LTE4. This is Cysteinyl leukotriene receptor 2 (Cysltr2) from Mus musculus (Mouse).